The following is a 285-amino-acid chain: Probable endonuclease 4 (285 aa).

Residues His69, His109, Glu145, Asp179, His182, His216, Asp229, His231, and Glu261 each coordinate Zn(2+).

This sequence belongs to the AP endonuclease 2 family. Zn(2+) is required as a cofactor.

It carries out the reaction Endonucleolytic cleavage to 5'-phosphooligonucleotide end-products.. Its function is as follows. Endonuclease IV plays a role in DNA repair. It cleaves phosphodiester bonds at apurinic or apyrimidinic (AP) sites, generating a 3'-hydroxyl group and a 5'-terminal sugar phosphate. The chain is Probable endonuclease 4 from Enterobacter sp. (strain 638).